The sequence spans 363 residues: Chorismate synthase (363 aa).

The NADP(+) site is built by Arg-48 and Arg-54. Residues 125-127 (RSS), 237-238 (NA), Gly-277, 292-296 (KPTSS), and Arg-318 contribute to the FMN site.

Belongs to the chorismate synthase family. As to quaternary structure, homotetramer. The cofactor is FMNH2.

It carries out the reaction 5-O-(1-carboxyvinyl)-3-phosphoshikimate = chorismate + phosphate. It functions in the pathway metabolic intermediate biosynthesis; chorismate biosynthesis; chorismate from D-erythrose 4-phosphate and phosphoenolpyruvate: step 7/7. In terms of biological role, catalyzes the anti-1,4-elimination of the C-3 phosphate and the C-6 proR hydrogen from 5-enolpyruvylshikimate-3-phosphate (EPSP) to yield chorismate, which is the branch point compound that serves as the starting substrate for the three terminal pathways of aromatic amino acid biosynthesis. This reaction introduces a second double bond into the aromatic ring system. The chain is Chorismate synthase from Pseudomonas syringae pv. syringae (strain B728a).